The sequence spans 618 residues: MEGAEAGARATFGPWDYGVFATMLLVSTGIGLWVGLARGGQRSADDFFTGGRQLAAVPVGLSLAASFMSAVQVLGVPAEAARYGLKFLWMCVGQLLNSLLTALLFLPIFYRLGLTSTYQYLELRFSRAVRLCGTLQYLVATMLYTGIVIYAPALILNQVTGLDIWASLLSTGIICTLYTTVGGMKAVVWTDVFQVVVMLVGFWVILARGVMLMGGPWNVLSLAQNHSRINLMDFDPDPRSRYTFWTFVVGGSLVWLSMYGVNQAQVQRYVACHTERKAKLALLVNQLGLFLIVASAACCGIVMFVYYKDCDPLLTGRIAAPDQYMPLLVLDIFEDLPGVPGLFLACAYSGTLSTASTSINAMAAVTVEDLIKPRMPSLAPRKLVFISKGLSFIYGSTCLTVAALSSLLGGGVLQGSFTVMGVISGPLLGAFTLGMLLPACNTPGVLSGLTAGLAVSLWVAVGATLYPPGEQTMGVLPTSAAGCTNASVLPSPPGAANTSRGIPSSGMDSGRPAFADTFYAVSYLYYGALGTLTTMLCGALISYLTGPTKRSSLGPGLLWWDLARQTASVAPKEDTTTLEDSLVKGPEDIPAATKKPPGFRPEAETHPLYLGHDVETNL.

The Extracellular segment spans residues methionine 1–proline 14. A helical membrane pass occupies residues tryptophan 15 to glycine 31. The Cytoplasmic portion of the chain corresponds to leucine 32 to alanine 56. Residues valine 57–alanine 80 traverse the membrane as a discontinuously helical segment. Residues serine 69, valine 71, and glutamine 72 each coordinate Na(+). Valine 76 contributes to the iodide binding site. The Extracellular portion of the chain corresponds to alanine 81–glycine 84. The helical transmembrane segment at leucine 85–phenylalanine 105 threads the bilayer. Iodide is bound at residue methionine 90. Topologically, residues leucine 106–arginine 130 are cytoplasmic. The chain crosses the membrane as a helical span at residues leucine 131 to asparagine 157. A Na(+)-binding site is contributed by tyrosine 144. Topologically, residues glutamine 158 to aspartate 163 are extracellular. The helical transmembrane segment at isoleucine 164–valine 181 threads the bilayer. Residues glycine 182–tryptophan 189 are Cytoplasmic-facing. Residues threonine 190–arginine 208 traverse the membrane as a helical segment. Topologically, residues glycine 209–threonine 243 are extracellular. The discontinuously helical transmembrane segment at phenylalanine 244–valine 266 threads the bilayer. Tryptophan 255 serves as a coordination point for iodide. Methionine 258 lines the Na(+) pocket. The Cytoplasmic segment spans residues glutamine 267 to alanine 278. The chain crosses the membrane as a helical span at residues lysine 279 to isoleucine 301. Residues valine 302–aspartate 335 are Extracellular-facing. A helical transmembrane segment spans residues leucine 336–alanine 363. Residues alanine 364–isoleucine 386 are Cytoplasmic-facing. Residues serine 387–leucine 408 traverse the membrane as a helical segment. Residues glycine 409–glycine 411 are Extracellular-facing. The chain crosses the membrane as a helical span at residues valine 412 to leucine 437. An iodide-binding site is contributed by leucine 413. Serine 416 and phenylalanine 417 together coordinate Na(+). Phenylalanine 417 lines the iodide pocket. The Cytoplasmic portion of the chain corresponds to proline 438–asparagine 441. Residues threonine 442–leucine 465 form a helical membrane-spanning segment. Topologically, residues tyrosine 466–alanine 520 are extracellular. Asparagine 485 and asparagine 497 each carry an N-linked (GlcNAc...) asparagine glycan. A helical membrane pass occupies residues valine 521–threonine 545. Over glycine 546 to leucine 618 the chain is Cytoplasmic. Position 551 is a phosphoserine; by PKA (serine 551). Positions proline 571–glutamate 587 are enriched in basic and acidic residues. The disordered stretch occupies residues proline 571 to leucine 618.

This sequence belongs to the sodium:solute symporter (SSF) (TC 2.A.21) family. In terms of assembly, monomer. Glycosylated.

It localises to the cell membrane. It is found in the cytoplasm. The enzyme catalyses iodide(out) + 2 Na(+)(out) = iodide(in) + 2 Na(+)(in). It catalyses the reaction chlorate(out) + 2 Na(+)(out) = chlorate(in) + 2 Na(+)(in). It carries out the reaction thiocyanate(out) + 2 Na(+)(out) = thiocyanate(in) + 2 Na(+)(in). The catalysed reaction is nitrate(out) + 2 Na(+)(out) = nitrate(in) + 2 Na(+)(in). The enzyme catalyses selenocyanate(out) + 2 Na(+)(out) = selenocyanate(in) + 2 Na(+)(in). Its activity is regulated as follows. Perchlorate inhibits iodide transport activity. Oxyanions inhibit iodide transport activity by blocking the binding sites for iodide and one of the sodium ions. Functionally, sodium:iodide symporter that mediates the transport of iodide into the thyroid gland. Can also mediate the transport of chlorate, thiocynate, nitrate and selenocynate. The polypeptide is Sodium/iodide cotransporter (Slc5a5) (Mus musculus (Mouse)).